The primary structure comprises 232 residues: Ornithine carbamoyltransferase (232 aa).

Residues Gln15, Arg39, and 66-69 (HPTQ) each bind carbamoyl phosphate. Residues Asn99, Asp163, and 167 to 168 (SM) contribute to the L-ornithine site. Carbamoyl phosphate contacts are provided by residues 204 to 207 (HCLP) and Thr232.

It belongs to the aspartate/ornithine carbamoyltransferase superfamily. OTCase family.

The protein localises to the cytoplasm. The catalysed reaction is carbamoyl phosphate + L-ornithine = L-citrulline + phosphate + H(+). It participates in amino-acid biosynthesis; L-arginine biosynthesis; L-arginine from L-ornithine and carbamoyl phosphate: step 1/3. In terms of biological role, reversibly catalyzes the transfer of the carbamoyl group from carbamoyl phosphate (CP) to the N(epsilon) atom of ornithine (ORN) to produce L-citrulline. The sequence is that of Ornithine carbamoyltransferase (argF) from Neisseria pharyngis.